The chain runs to 365 residues: 4-hydroxy-3-methylbut-2-en-1-yl diphosphate synthase (flavodoxin) (365 aa).

C265, C268, C300, and E307 together coordinate [4Fe-4S] cluster.

This sequence belongs to the IspG family. The cofactor is [4Fe-4S] cluster.

The catalysed reaction is (2E)-4-hydroxy-3-methylbut-2-enyl diphosphate + oxidized [flavodoxin] + H2O + 2 H(+) = 2-C-methyl-D-erythritol 2,4-cyclic diphosphate + reduced [flavodoxin]. It participates in isoprenoid biosynthesis; isopentenyl diphosphate biosynthesis via DXP pathway; isopentenyl diphosphate from 1-deoxy-D-xylulose 5-phosphate: step 5/6. In terms of biological role, converts 2C-methyl-D-erythritol 2,4-cyclodiphosphate (ME-2,4cPP) into 1-hydroxy-2-methyl-2-(E)-butenyl 4-diphosphate. The polypeptide is 4-hydroxy-3-methylbut-2-en-1-yl diphosphate synthase (flavodoxin) (Bacillus mycoides (strain KBAB4) (Bacillus weihenstephanensis)).